The chain runs to 387 residues: Putative 8-amino-7-oxononanoate synthase (387 aa).

Arg-19 contacts substrate. Pyridoxal 5'-phosphate is bound at residue 107-108; the sequence is GY. His-132 lines the substrate pocket. Pyridoxal 5'-phosphate contacts are provided by residues Ser-180, 206–209, and 237–240; these read DEAH and TFGK. Lys-240 bears the N6-(pyridoxal phosphate)lysine mark. Thr-354 provides a ligand contact to substrate.

Belongs to the class-II pyridoxal-phosphate-dependent aminotransferase family. BioF subfamily. In terms of assembly, homodimer. Pyridoxal 5'-phosphate is required as a cofactor.

The catalysed reaction is 6-carboxyhexanoyl-[ACP] + L-alanine + H(+) = (8S)-8-amino-7-oxononanoate + holo-[ACP] + CO2. The protein operates within cofactor biosynthesis; biotin biosynthesis. In terms of biological role, catalyzes the decarboxylative condensation of pimeloyl-[acyl-carrier protein] and L-alanine to produce 8-amino-7-oxononanoate (AON), [acyl-carrier protein], and carbon dioxide. This Pasteurella multocida (strain Pm70) protein is Putative 8-amino-7-oxononanoate synthase (bioF).